The sequence spans 944 residues: Protein unc-45 homolog A (944 aa).

Residues 1–25 (MTVSGPETPEPRPSDPGASSAEQLR) are disordered. TPR repeat units follow at residues 21–54 (AEQLRKEGNELFKCGDYEGALTAYTQALSLGATP), 58–91 (AILHRNRAACHLKLEDYSKAESEASKAIEKDGGD), and 92–125 (VKALYRRSQALEKLGRLDQAVLDLKRCVSLEPKN). The residue at position 70 (K70) is an N6-acetyllysine. N6-acetyllysine is present on K483.

In terms of assembly, interacts with PGR isoforms A and B as well as with NR3C1 in the absence of ligand, and with HSP90AB1. Binding to HSP90AB1 involves 2 UNC45A monomers per HSP90AB1 dimer. Detected in spleen, bone marrow, lung and ovary, and at lower levels in testis, kidney, heart and brain (at protein level). Ubiquitous. Detected in uterus, large intestine, kidney, spleen, lung, brain, liver and ovary.

Its subcellular location is the cytoplasm. The protein resides in the perinuclear region. It localises to the nucleus. In terms of biological role, may act as co-chaperone for HSP90 (Potential). Prevents the stimulation of HSP90AB1 ATPase activity by AHSA1. Positive factor in promoting PGR function in the cell. May be necessary for proper folding of myosin (Potential). Necessary for normal cell proliferation. Necessary for normal myotube formation and myosin accumulation during muscle cell development. May play a role in erythropoiesis in stroma cells in the spleen. This is Protein unc-45 homolog A (Unc45a) from Mus musculus (Mouse).